A 627-amino-acid chain; its full sequence is Phosphomethylpyrimidine synthase (627 aa).

The span at 1–24 (MSATQKNNITRLEQLDRQSTQPFP) shows a compositional bias: polar residues. The segment at 1–29 (MSATQKNNITRLEQLDRQSTQPFPNSRKV) is disordered. Substrate-binding positions include N231, M260, Y289, H325, 345–347 (SRG), 386–389 (DGLR), and E425. H429 provides a ligand contact to Zn(2+). Y452 provides a ligand contact to substrate. Zn(2+) is bound at residue H493. [4Fe-4S] cluster contacts are provided by C573, C576, and C581.

Belongs to the ThiC family. In terms of assembly, homodimer. [4Fe-4S] cluster serves as cofactor.

It catalyses the reaction 5-amino-1-(5-phospho-beta-D-ribosyl)imidazole + S-adenosyl-L-methionine = 4-amino-2-methyl-5-(phosphooxymethyl)pyrimidine + CO + 5'-deoxyadenosine + formate + L-methionine + 3 H(+). It participates in cofactor biosynthesis; thiamine diphosphate biosynthesis. In terms of biological role, catalyzes the synthesis of the hydroxymethylpyrimidine phosphate (HMP-P) moiety of thiamine from aminoimidazole ribotide (AIR) in a radical S-adenosyl-L-methionine (SAM)-dependent reaction. The protein is Phosphomethylpyrimidine synthase of Pseudomonas paraeruginosa (strain DSM 24068 / PA7) (Pseudomonas aeruginosa (strain PA7)).